The primary structure comprises 230 residues: Sugar fermentation stimulation protein homolog (230 aa).

It belongs to the SfsA family.

This Clostridium kluyveri (strain NBRC 12016) protein is Sugar fermentation stimulation protein homolog.